A 359-amino-acid chain; its full sequence is Pyruvate dehydrogenase E1 component subunit beta, mitochondrial (359 aa).

A mitochondrion-targeting transit peptide spans 1 to 19 (MLGVIRNKTIRPSFSAFRF). Glutamate 82 is a thiamine diphosphate binding site. Isoleucine 135, alanine 183, isoleucine 184, and aspartate 186 together coordinate K(+).

In terms of assembly, tetramer of 2 alpha and 2 beta subunits. Thiamine diphosphate is required as a cofactor.

The protein resides in the mitochondrion matrix. The catalysed reaction is N(6)-[(R)-lipoyl]-L-lysyl-[protein] + pyruvate + H(+) = N(6)-[(R)-S(8)-acetyldihydrolipoyl]-L-lysyl-[protein] + CO2. Its function is as follows. The pyruvate dehydrogenase complex catalyzes the overall conversion of pyruvate to acetyl-CoA and CO(2). It contains multiple copies of three enzymatic components: pyruvate dehydrogenase (E1), dihydrolipoamide acetyltransferase (E2) and lipoamide dehydrogenase (E3). The sequence is that of Pyruvate dehydrogenase E1 component subunit beta, mitochondrial from Pisum sativum (Garden pea).